A 320-amino-acid chain; its full sequence is Cytosolic Fe-S cluster assembly factor NUBP1 (320 aa).

N-acetylmethionine is present on Met1. [4Fe-4S] cluster contacts are provided by Cys8, Cys22, Cys25, and Cys31. 62 to 69 provides a ligand contact to ATP; it reads GKGGVGKS. [4Fe-4S] cluster is bound by residues Cys235 and Cys238.

Belongs to the Mrp/NBP35 ATP-binding proteins family. NUBP1/NBP35 subfamily. As to quaternary structure, heterotetramer of 2 NUBP1 and 2 NUBP2 chains. Interacts with KIFC1. Interacts with the BBS/CCT complex subunit CCT1. [4Fe-4S] cluster serves as cofactor.

It localises to the cytoplasm. The protein localises to the nucleus. Its subcellular location is the cell projection. The protein resides in the cytoskeleton. It is found in the cilium axoneme. It localises to the cilium basal body. The protein localises to the microtubule organizing center. Its subcellular location is the centrosome. The protein resides in the centriole. Functionally, component of the cytosolic iron-sulfur (Fe/S) protein assembly (CIA) machinery. Required for maturation of extramitochondrial Fe-S proteins. The NUBP1-NUBP2 heterotetramer forms a Fe-S scaffold complex, mediating the de novo assembly of an Fe-S cluster and its transfer to target apoproteins. Implicated in the regulation of centrosome duplication. Negatively regulates cilium formation and structure. This Bos taurus (Bovine) protein is Cytosolic Fe-S cluster assembly factor NUBP1.